The primary structure comprises 341 residues: IYRMHANKREEIESVGAGDIVAVMGLKQTTTGETLSDEKSPVILESMDFPAPVIQVAIEPKSKGDQEKLGVAIQRLAEEDPSFQVHSDEETGQTIIGGMGELHLEVLVDRMRREFKVEANVGKPQVAYRETIRQAVEKVEYTHKKQTGGTGQFARVIIAIEPIESGDTSYEFVNKVTGGRVPKEYIPSVDAGAQEAMQFGILAGYEMTGVRVTLLDGAYHEVDSSELAFKIAGSQAFKEAARKAKPVLLEPMMAVEVTTPEDYMGEVIGDINSRRGQIQAMEERAGARVVKGLVPLSEMFGYVGDLRSKTSGRASYSMQFDSYAEVPRNVAEEIIAKAKGE.

It belongs to the GTP-binding elongation factor family. EF-G/EF-2 subfamily.

Its subcellular location is the cytoplasm. Catalyzes the GTP-dependent ribosomal translocation step during translation elongation. During this step, the ribosome changes from the pre-translocational (PRE) to the post-translocational (POST) state as the newly formed A-site-bound peptidyl-tRNA and P-site-bound deacylated tRNA move to the P and E sites, respectively. Catalyzes the coordinated movement of the two tRNA molecules, the mRNA and conformational changes in the ribosome. The sequence is that of Elongation factor G (fus) from Streptomyces ramocissimus.